We begin with the raw amino-acid sequence, 104 residues long: MAAKIRKGDKVIVLTGRDKGRTGEVFAVRPSEGRALVRGVNMVKRHQKQTPQQEGGIISKESPIHLSNLALLDKDGKPTRVGFKIGKDGTKVRIAKSSGAEIDG.

This sequence belongs to the universal ribosomal protein uL24 family. In terms of assembly, part of the 50S ribosomal subunit.

Its function is as follows. One of two assembly initiator proteins, it binds directly to the 5'-end of the 23S rRNA, where it nucleates assembly of the 50S subunit. In terms of biological role, one of the proteins that surrounds the polypeptide exit tunnel on the outside of the subunit. This Afipia carboxidovorans (strain ATCC 49405 / DSM 1227 / KCTC 32145 / OM5) (Oligotropha carboxidovorans) protein is Large ribosomal subunit protein uL24.